Here is a 202-residue protein sequence, read N- to C-terminus: Dephospho-CoA kinase (202 aa).

In terms of domain architecture, DPCK spans 3–201 (AIGLTGGIGS…QRYLGFAAAA (199 aa)). 11 to 16 (GSGKTT) contacts ATP.

This sequence belongs to the CoaE family.

It localises to the cytoplasm. It carries out the reaction 3'-dephospho-CoA + ATP = ADP + CoA + H(+). It participates in cofactor biosynthesis; coenzyme A biosynthesis; CoA from (R)-pantothenate: step 5/5. In terms of biological role, catalyzes the phosphorylation of the 3'-hydroxyl group of dephosphocoenzyme A to form coenzyme A. In Burkholderia lata (strain ATCC 17760 / DSM 23089 / LMG 22485 / NCIMB 9086 / R18194 / 383), this protein is Dephospho-CoA kinase.